Consider the following 394-residue polypeptide: Mitogen-activated protein kinase 2 (394 aa).

The span at 1-10 shows a compositional bias: polar residues; it reads MDGPAQQTDT. The disordered stretch occupies residues 1–27; that stretch reads MDGPAQQTDTVMAEAAAAQQPAPPSQP. One can recognise a Protein kinase domain in the interval 61–346; sequence KPPIMPIGKG…VEDALAHPYL (286 aa). Residues 67 to 75 and K90 contribute to the ATP site; that span reads IGKGAYGIV. The active-site Proton acceptor is the D187. The residue at position 219 (T219) is a Phosphothreonine. The TXY signature appears at 219–221; it reads TEY. Y221 is modified (phosphotyrosine). T224 carries the phosphothreonine modification.

Belongs to the protein kinase superfamily. CMGC Ser/Thr protein kinase family. MAP kinase subfamily. Mg(2+) is required as a cofactor. Post-translationally, activated by cold, wounding and UV-C in a cultivar-dependent manner; phosphorylated at Tyr-221 in cv. Subicho but not in cv. Pungchon. As to expression, expressed constitutively in roots, stems, flowers and fruits of the hot pepper (cv. Subicho).

The catalysed reaction is L-seryl-[protein] + ATP = O-phospho-L-seryl-[protein] + ADP + H(+). It carries out the reaction L-threonyl-[protein] + ATP = O-phospho-L-threonyl-[protein] + ADP + H(+). Activated by threonine and tyrosine phosphorylation. In terms of biological role, protein kinase involved in oxidative stress-mediated and innate immune MAP kinase signaling cascades. The protein is Mitogen-activated protein kinase 2 of Capsicum annuum (Capsicum pepper).